The following is a 172-amino-acid chain: dCTP deaminase, dUMP-forming (172 aa).

DCTP-binding positions include 93–98 (RSSVGR), aspartate 111, 119–121 (TLE), glutamine 138, and tyrosine 151. Catalysis depends on glutamate 121, which acts as the Proton donor/acceptor.

This sequence belongs to the dCTP deaminase family. Homotrimer.

The catalysed reaction is dCTP + 2 H2O = dUMP + NH4(+) + diphosphate. Its pathway is pyrimidine metabolism; dUMP biosynthesis; dUMP from dCTP: step 1/1. Its function is as follows. Bifunctional enzyme that catalyzes both the deamination of dCTP to dUTP and the hydrolysis of dUTP to dUMP without releasing the toxic dUTP intermediate. The protein is dCTP deaminase, dUMP-forming of Hathewaya histolytica (Clostridium histolyticum).